The primary structure comprises 159 residues: MAIEGLMKQGFVTTSLNNVINWARTGSLWPMTFGLACCAVEMMEAGSSRYDLDRFGIVFRPTPRQSDLMIVAGTLTNKMAPALRKVYDQMPEPRWVISMGSCANGGGYYHYSYAVVRGCDRIVPVDIYVPGCPPTAEALLYGIIQLQDKIRSTNTIART.

Residues Cys37, Cys38, Cys102, and Cys132 each coordinate [4Fe-4S] cluster.

The protein belongs to the complex I 20 kDa subunit family. As to quaternary structure, NDH-1 is composed of 14 different subunits. Subunits NuoB, C, D, E, F, and G constitute the peripheral sector of the complex. The cofactor is [4Fe-4S] cluster.

Its subcellular location is the cell inner membrane. It carries out the reaction a quinone + NADH + 5 H(+)(in) = a quinol + NAD(+) + 4 H(+)(out). Its function is as follows. NDH-1 shuttles electrons from NADH, via FMN and iron-sulfur (Fe-S) centers, to quinones in the respiratory chain. Couples the redox reaction to proton translocation (for every two electrons transferred, four hydrogen ions are translocated across the cytoplasmic membrane), and thus conserves the redox energy in a proton gradient. This is NADH-quinone oxidoreductase subunit B from Ruthia magnifica subsp. Calyptogena magnifica.